Consider the following 184-residue polypeptide: NADH-quinone oxidoreductase subunit B (184 aa).

[4Fe-4S] cluster-binding residues include Cys-37, Cys-38, Cys-103, and Cys-132.

The protein belongs to the complex I 20 kDa subunit family. NDH-1 is composed of 14 different subunits. Subunits NuoB, C, D, E, F, and G constitute the peripheral sector of the complex. [4Fe-4S] cluster is required as a cofactor.

The protein localises to the cell membrane. The catalysed reaction is a quinone + NADH + 5 H(+)(in) = a quinol + NAD(+) + 4 H(+)(out). In terms of biological role, NDH-1 shuttles electrons from NADH, via FMN and iron-sulfur (Fe-S) centers, to quinones in the respiratory chain. The immediate electron acceptor for the enzyme in this species is believed to be a menaquinone. Couples the redox reaction to proton translocation (for every two electrons transferred, four hydrogen ions are translocated across the cytoplasmic membrane), and thus conserves the redox energy in a proton gradient. This chain is NADH-quinone oxidoreductase subunit B, found in Beutenbergia cavernae (strain ATCC BAA-8 / DSM 12333 / CCUG 43141 / JCM 11478 / NBRC 16432 / NCIMB 13614 / HKI 0122).